Here is a 447-residue protein sequence, read N- to C-terminus: Argininosuccinate synthase (447 aa).

ATP-binding positions include 17–25 (AFSGGLDTS) and A43. Y99 provides a ligand contact to L-citrulline. Positions 129 and 131 each coordinate ATP. Residues T131, N135, and D136 each contribute to the L-aspartate site. An L-citrulline-binding site is contributed by N135. D136 contacts ATP. 2 residues coordinate L-citrulline: R139 and S192. ATP is bound at residue D194. The L-citrulline site is built by T201, E203, and E280.

It belongs to the argininosuccinate synthase family. Type 2 subfamily. In terms of assembly, homotetramer.

It localises to the cytoplasm. It carries out the reaction L-citrulline + L-aspartate + ATP = 2-(N(omega)-L-arginino)succinate + AMP + diphosphate + H(+). It participates in amino-acid biosynthesis; L-arginine biosynthesis; L-arginine from L-ornithine and carbamoyl phosphate: step 2/3. The sequence is that of Argininosuccinate synthase from Salmonella newport (strain SL254).